A 52-amino-acid polypeptide reads, in one-letter code: Insulin (52 aa).

Intrachain disulfides connect Cys-7/Cys-38, Cys-19/Cys-51, and Cys-37/Cys-42.

This sequence belongs to the insulin family. As to quaternary structure, heterodimer of a B chain and an A chain linked by two disulfide bonds.

Its subcellular location is the secreted. Its function is as follows. Insulin decreases blood glucose concentration. It increases cell permeability to monosaccharides, amino acids and fatty acids. It accelerates glycolysis, the pentose phosphate cycle, and glycogen synthesis in liver. This is Insulin (ins) from Acipenser gueldenstaedtii (Russian sturgeon).